A 123-amino-acid chain; its full sequence is Immunoglobulin lambda variable 5-37 (123 aa).

Residues 1-19 (MAWTPLLLLLLSHCTGSLS) form the signal peptide. Positions 20–44 (QPVLTQPPSSSASPGESARLTCTLP) are framework-1. The Ig-like domain occupies 21-123 (PVLTQPPSSS…YCMIWPSNAS (103 aa)). Cys-41 and Cys-115 are oxidised to a cystine. A complementarity-determining-1 region spans residues 45 to 53 (SDINVGSYN). The interval 54 to 70 (IYWYQQKPGSPPRYLLY) is framework-2. The interval 71-77 (YYSDSDK) is complementarity-determining-2. The segment at 78-115 (GQGSGVPSRFSGSKDASANTGILLISGLQSEDEADYYC) is framework-3. The complementarity-determining-3 stretch occupies residues 116-123 (MIWPSNAS).

In terms of assembly, immunoglobulins are composed of two identical heavy chains and two identical light chains; disulfide-linked.

Its subcellular location is the secreted. It is found in the cell membrane. In terms of biological role, v region of the variable domain of immunoglobulin light chains that participates in the antigen recognition. Immunoglobulins, also known as antibodies, are membrane-bound or secreted glycoproteins produced by B lymphocytes. In the recognition phase of humoral immunity, the membrane-bound immunoglobulins serve as receptors which, upon binding of a specific antigen, trigger the clonal expansion and differentiation of B lymphocytes into immunoglobulins-secreting plasma cells. Secreted immunoglobulins mediate the effector phase of humoral immunity, which results in the elimination of bound antigens. The antigen binding site is formed by the variable domain of one heavy chain, together with that of its associated light chain. Thus, each immunoglobulin has two antigen binding sites with remarkable affinity for a particular antigen. The variable domains are assembled by a process called V-(D)-J rearrangement and can then be subjected to somatic hypermutations which, after exposure to antigen and selection, allow affinity maturation for a particular antigen. The protein is Immunoglobulin lambda variable 5-37 of Homo sapiens (Human).